We begin with the raw amino-acid sequence, 85 residues long: UPF0386 protein MXAN_1729 (85 aa).

The protein belongs to the UPF0386 family.

In Myxococcus xanthus (strain DK1622), this protein is UPF0386 protein MXAN_1729.